The following is a 149-amino-acid chain: Large ribosomal subunit protein uL15 (149 aa).

Residues 14–57 (KQRKRVGRGSGSGWGCTSGKGNKGQNARSGGGVRPGFEGGQMPL) form a disordered region. Composition is skewed to gly residues over residues 21-35 (RGSGSGWGCTSGKGN) and 42-52 (SGGGVRPGFEG).

The protein belongs to the universal ribosomal protein uL15 family. In terms of assembly, part of the 50S ribosomal subunit.

Binds to the 23S rRNA. This chain is Large ribosomal subunit protein uL15, found in Oleidesulfovibrio alaskensis (strain ATCC BAA-1058 / DSM 17464 / G20) (Desulfovibrio alaskensis).